A 526-amino-acid polypeptide reads, in one-letter code: ATP synthase subunit alpha (526 aa).

ATP is bound at residue 174–181 (GDRKTGKT). Basic and acidic residues predominate over residues 505-520 (FEPARSEVKVETRPQE). The segment at 505 to 526 (FEPARSEVKVETRPQEEEGEEG) is disordered.

Belongs to the ATPase alpha/beta chains family. In terms of assembly, F-type ATPases have 2 components, CF(1) - the catalytic core - and CF(0) - the membrane proton channel. CF(1) has five subunits: alpha(3), beta(3), gamma(1), delta(1), epsilon(1). CF(0) has three main subunits: a(1), b(2) and c(9-12). The alpha and beta chains form an alternating ring which encloses part of the gamma chain. CF(1) is attached to CF(0) by a central stalk formed by the gamma and epsilon chains, while a peripheral stalk is formed by the delta and b chains.

Its subcellular location is the cell membrane. The catalysed reaction is ATP + H2O + 4 H(+)(in) = ADP + phosphate + 5 H(+)(out). Produces ATP from ADP in the presence of a proton gradient across the membrane. The alpha chain is a regulatory subunit. This Rubrobacter xylanophilus (strain DSM 9941 / JCM 11954 / NBRC 16129 / PRD-1) protein is ATP synthase subunit alpha.